A 98-amino-acid polypeptide reads, in one-letter code: Large ribosomal subunit protein eL21 (98 aa).

A disordered region spans residues Met-1–Gln-23. Positions Lys-7–Gln-23 are enriched in basic residues.

The protein belongs to the eukaryotic ribosomal protein eL21 family.

In Nanoarchaeum equitans (strain Kin4-M), this protein is Large ribosomal subunit protein eL21.